Here is a 796-residue protein sequence, read N- to C-terminus: Protein tyrosine phosphatase domain-containing protein 1 (796 aa).

A Tyrosine-protein phosphatase domain is found at 126–297 (YSSWVTDNIL…LIPLRNIFSC (172 aa)). Cysteine 234 (phosphocysteine intermediate) is an active-site residue. A phosphoserine mark is found at serine 435 and serine 437.

Belongs to the protein-tyrosine phosphatase family. Non-receptor class PTPDC1 subfamily.

Functionally, may play roles in cilia formation and/or maintenance. The protein is Protein tyrosine phosphatase domain-containing protein 1 (PTPDC1) of Bos taurus (Bovine).